The chain runs to 156 residues: Cyclic pyranopterin monophosphate synthase (156 aa).

Residues 75–77 (LCH) and 111–112 (ME) contribute to the substrate site. Asp-126 is a catalytic residue.

This sequence belongs to the MoaC family. In terms of assembly, homohexamer; trimer of dimers.

The catalysed reaction is (8S)-3',8-cyclo-7,8-dihydroguanosine 5'-triphosphate = cyclic pyranopterin phosphate + diphosphate. It functions in the pathway cofactor biosynthesis; molybdopterin biosynthesis. Functionally, catalyzes the conversion of (8S)-3',8-cyclo-7,8-dihydroguanosine 5'-triphosphate to cyclic pyranopterin monophosphate (cPMP). The chain is Cyclic pyranopterin monophosphate synthase from Corynebacterium glutamicum (strain R).